Reading from the N-terminus, the 405-residue chain is Glucose-1-phosphate adenylyltransferase (405 aa).

Alpha-D-glucose 1-phosphate-binding positions include Y96, G161, 176-177 (EK), and S194.

This sequence belongs to the bacterial/plant glucose-1-phosphate adenylyltransferase family. As to quaternary structure, homotetramer.

It carries out the reaction alpha-D-glucose 1-phosphate + ATP + H(+) = ADP-alpha-D-glucose + diphosphate. Its pathway is glycan biosynthesis; glycogen biosynthesis. Its function is as follows. Involved in the biosynthesis of ADP-glucose, a building block required for the elongation reactions to produce glycogen. Catalyzes the reaction between ATP and alpha-D-glucose 1-phosphate (G1P) to produce pyrophosphate and ADP-Glc. This Photobacterium profundum (strain SS9) protein is Glucose-1-phosphate adenylyltransferase.